The sequence spans 374 residues: Dual-specificity RNA methyltransferase RlmN (374 aa).

The active-site Proton acceptor is the E94. The 240-residue stretch at 100–339 (EEDRATLCVS…VTIRKTRGDD (240 aa)) folds into the Radical SAM core domain. Residues C107 and C344 are joined by a disulfide bond. C114, C118, and C121 together coordinate [4Fe-4S] cluster. S-adenosyl-L-methionine contacts are provided by residues 168–169 (GE), S200, 222–224 (SLH), and N301. C344 functions as the S-methylcysteine intermediate in the catalytic mechanism.

This sequence belongs to the radical SAM superfamily. RlmN family. The cofactor is [4Fe-4S] cluster.

It localises to the cytoplasm. It carries out the reaction adenosine(2503) in 23S rRNA + 2 reduced [2Fe-2S]-[ferredoxin] + 2 S-adenosyl-L-methionine = 2-methyladenosine(2503) in 23S rRNA + 5'-deoxyadenosine + L-methionine + 2 oxidized [2Fe-2S]-[ferredoxin] + S-adenosyl-L-homocysteine. The enzyme catalyses adenosine(37) in tRNA + 2 reduced [2Fe-2S]-[ferredoxin] + 2 S-adenosyl-L-methionine = 2-methyladenosine(37) in tRNA + 5'-deoxyadenosine + L-methionine + 2 oxidized [2Fe-2S]-[ferredoxin] + S-adenosyl-L-homocysteine. Functionally, specifically methylates position 2 of adenine 2503 in 23S rRNA and position 2 of adenine 37 in tRNAs. m2A2503 modification seems to play a crucial role in the proofreading step occurring at the peptidyl transferase center and thus would serve to optimize ribosomal fidelity. In Vibrio vulnificus (strain CMCP6), this protein is Dual-specificity RNA methyltransferase RlmN.